Consider the following 284-residue polypeptide: RAD52 motif-containing protein 1 (284 aa).

The tract at residues 1–92 (MAELVPFAVP…KQLFQKSPVK (92 aa)) is necessary for nuclear localization and for nucleolar accumulation in response to heat shock. The 84-residue stretch at 15 to 98 (KTLLVWELSS…SPVKVRLGTR (84 aa)) folds into the RRM domain. Residues 90-133 (PVKVRLGTRHKAVQHQALALNSSKCQELANYYFGFNGCSKRIIK) form a necessary for nuclear and nucleolar localization region.

As to quaternary structure, homodimer. As to expression, expressed in testis.

The protein localises to the nucleus. Its subcellular location is the cytoplasm. The protein resides in the nucleolus. It is found in the PML body. It localises to the cajal body. Functionally, may confer resistance to the antitumor agent cisplatin. Binds to DNA and RNA. The sequence is that of RAD52 motif-containing protein 1 (RDM1) from Homo sapiens (Human).